A 63-amino-acid chain; its full sequence is Large ribosomal subunit protein bL28 (63 aa).

The protein belongs to the bacterial ribosomal protein bL28 family.

This chain is Large ribosomal subunit protein bL28, found in Dictyoglomus thermophilum (strain ATCC 35947 / DSM 3960 / H-6-12).